A 245-amino-acid chain; its full sequence is Flavin-dependent thymidylate synthase (245 aa).

Residues 5 to 210 (IRVKLVNYTK…ELRPIIKWAK (206 aa)) enclose the ThyX domain. Residues Ser59, 83–85 (RHR), and Gln91 contribute to the FAD site. DUMP-binding positions include 80 to 83 (QLVR), 91 to 95 (QQSQR), and Arg149. The short motif at 83 to 93 (RHRLASYTQQS) is the ThyX motif element. Residues 165–167 (NLR) and His171 contribute to the FAD site. Residue Arg176 coordinates dUMP. Catalysis depends on Arg176, which acts as the Involved in ionization of N3 of dUMP, leading to its activation.

It belongs to the thymidylate synthase ThyX family. Homotetramer. Requires FAD as cofactor.

It catalyses the reaction dUMP + (6R)-5,10-methylene-5,6,7,8-tetrahydrofolate + NADPH + H(+) = dTMP + (6S)-5,6,7,8-tetrahydrofolate + NADP(+). It functions in the pathway pyrimidine metabolism; dTTP biosynthesis. Functionally, catalyzes the reductive methylation of 2'-deoxyuridine-5'-monophosphate (dUMP) to 2'-deoxythymidine-5'-monophosphate (dTMP) while utilizing 5,10-methylenetetrahydrofolate (mTHF) as the methyl donor, and NADPH and FADH(2) as the reductant. The sequence is that of Flavin-dependent thymidylate synthase from Thermococcus kodakarensis (strain ATCC BAA-918 / JCM 12380 / KOD1) (Pyrococcus kodakaraensis (strain KOD1)).